A 303-amino-acid polypeptide reads, in one-letter code: Methionyl-tRNA formyltransferase (303 aa).

110–113 (SLLP) provides a ligand contact to (6S)-5,6,7,8-tetrahydrofolate.

Belongs to the Fmt family.

It catalyses the reaction L-methionyl-tRNA(fMet) + (6R)-10-formyltetrahydrofolate = N-formyl-L-methionyl-tRNA(fMet) + (6S)-5,6,7,8-tetrahydrofolate + H(+). Attaches a formyl group to the free amino group of methionyl-tRNA(fMet). The formyl group appears to play a dual role in the initiator identity of N-formylmethionyl-tRNA by promoting its recognition by IF2 and preventing the misappropriation of this tRNA by the elongation apparatus. The protein is Methionyl-tRNA formyltransferase of Campylobacter lari (strain RM2100 / D67 / ATCC BAA-1060).